The primary structure comprises 288 residues: Pyridoxal kinase PdxY (288 aa).

Substrate-binding positions include Ser10 and 45–46 (TQ). Residues Asp112, Ala143, Glu148, and Lys181 each contribute to the ATP site. Asp222 is a binding site for substrate.

It belongs to the pyridoxine kinase family. PdxY subfamily. In terms of assembly, homodimer. The cofactor is Mg(2+).

It carries out the reaction pyridoxal + ATP = pyridoxal 5'-phosphate + ADP + H(+). The protein operates within cofactor metabolism; pyridoxal 5'-phosphate salvage; pyridoxal 5'-phosphate from pyridoxal: step 1/1. Pyridoxal kinase involved in the salvage pathway of pyridoxal 5'-phosphate (PLP). Catalyzes the phosphorylation of pyridoxal to PLP. The chain is Pyridoxal kinase PdxY from Paraburkholderia xenovorans (strain LB400).